A 293-amino-acid chain; its full sequence is Heterogeneous nuclear ribonucleoprotein D-like-A (293 aa).

Positions M1–N21 are disordered. 2 RRM domains span residues G26 to E108 and K111 to P188. Disordered stretches follow at residues R193–Q224 and Q274–Y293. Over residues G202–W222 the composition is skewed to gly residues.

It localises to the nucleus. It is found in the cytoplasm. In terms of biological role, acts as a transcriptional regulator. Binds DNA and RNA. This chain is Heterogeneous nuclear ribonucleoprotein D-like-A (hnrnpdl-a), found in Xenopus laevis (African clawed frog).